Reading from the N-terminus, the 459-residue chain is Argininosuccinate lyase (459 aa).

It belongs to the lyase 1 family. Argininosuccinate lyase subfamily.

It is found in the cytoplasm. The catalysed reaction is 2-(N(omega)-L-arginino)succinate = fumarate + L-arginine. It functions in the pathway amino-acid biosynthesis; L-arginine biosynthesis; L-arginine from L-ornithine and carbamoyl phosphate: step 3/3. This is Argininosuccinate lyase from Staphylococcus saprophyticus subsp. saprophyticus (strain ATCC 15305 / DSM 20229 / NCIMB 8711 / NCTC 7292 / S-41).